Here is a 76-residue protein sequence, read N- to C-terminus: Mating-type pheromone BBP1(1) (76 aa).

Cysteine 73 is modified (cysteine methyl ester). A lipid anchor (S-farnesyl cysteine) is attached at cysteine 73. Positions 74–76 (VVA) are cleaved as a propeptide — removed in mature form.

Its subcellular location is the cell membrane. Activates B-regulated development. The protein is Mating-type pheromone BBP1(1) (BBP1(1)) of Schizophyllum commune (Split gill fungus).